Reading from the N-terminus, the 266-residue chain is Indole-3-glycerol phosphate synthase (266 aa).

This sequence belongs to the TrpC family.

The catalysed reaction is 1-(2-carboxyphenylamino)-1-deoxy-D-ribulose 5-phosphate + H(+) = (1S,2R)-1-C-(indol-3-yl)glycerol 3-phosphate + CO2 + H2O. It participates in amino-acid biosynthesis; L-tryptophan biosynthesis; L-tryptophan from chorismate: step 4/5. This is Indole-3-glycerol phosphate synthase from Variovorax paradoxus (strain S110).